A 1065-amino-acid chain; its full sequence is N-terminal acetyltransferase B complex auxiliary subunit NAA25 (1065 aa).

The stretch at 294–327 (VDKLRIQGRLLARANDYSAAVDVYKKILELSPDD) is one TPR repeat.

Belongs to the MDM20/NAA25 family. In terms of tissue distribution, ubiquitously expressed, with a higher expression in vascular bundles, hydathodes, leaf primordia and the base of the trichomes.

The protein localises to the cytoplasm. In terms of biological role, auxiliary subunit of the NatB N-alpha-acetyltransferase complex. Required for flowering time regulation and for vegetative and reproductive plant development. This chain is N-terminal acetyltransferase B complex auxiliary subunit NAA25, found in Arabidopsis thaliana (Mouse-ear cress).